The following is a 100-amino-acid chain: ATP synthase subunit c (100 aa).

The next 2 membrane-spanning stretches (helical) occupy residues 30–50 (LLYLGAGLAIGLAGLGAGVGM) and 80–100 (AFIETIALYGLLIAFILLFVV).

Belongs to the ATPase C chain family. F-type ATPases have 2 components, F(1) - the catalytic core - and F(0) - the membrane proton channel. F(1) has five subunits: alpha(3), beta(3), gamma(1), delta(1), epsilon(1). F(0) has three main subunits: a(1), b(2) and c(10-14). The alpha and beta chains form an alternating ring which encloses part of the gamma chain. F(1) is attached to F(0) by a central stalk formed by the gamma and epsilon chains, while a peripheral stalk is formed by the delta and b chains.

The protein resides in the cell inner membrane. Its function is as follows. F(1)F(0) ATP synthase produces ATP from ADP in the presence of a proton or sodium gradient. F-type ATPases consist of two structural domains, F(1) containing the extramembraneous catalytic core and F(0) containing the membrane proton channel, linked together by a central stalk and a peripheral stalk. During catalysis, ATP synthesis in the catalytic domain of F(1) is coupled via a rotary mechanism of the central stalk subunits to proton translocation. Key component of the F(0) channel; it plays a direct role in translocation across the membrane. A homomeric c-ring of between 10-14 subunits forms the central stalk rotor element with the F(1) delta and epsilon subunits. This chain is ATP synthase subunit c, found in Aquifex aeolicus (strain VF5).